A 296-amino-acid chain; its full sequence is Phosphatidylserine decarboxylase proenzyme (296 aa).

Residues D113, H169, and S256 each act as charge relay system; for autoendoproteolytic cleavage activity in the active site. The active-site Schiff-base intermediate with substrate; via pyruvic acid; for decarboxylase activity is the S256. Residue S256 is modified to Pyruvic acid (Ser); by autocatalysis.

This sequence belongs to the phosphatidylserine decarboxylase family. PSD-B subfamily. Prokaryotic type II sub-subfamily. In terms of assembly, heterodimer of a large membrane-associated beta subunit and a small pyruvoyl-containing alpha subunit. It depends on pyruvate as a cofactor. Is synthesized initially as an inactive proenzyme. Formation of the active enzyme involves a self-maturation process in which the active site pyruvoyl group is generated from an internal serine residue via an autocatalytic post-translational modification. Two non-identical subunits are generated from the proenzyme in this reaction, and the pyruvate is formed at the N-terminus of the alpha chain, which is derived from the carboxyl end of the proenzyme. The autoendoproteolytic cleavage occurs by a canonical serine protease mechanism, in which the side chain hydroxyl group of the serine supplies its oxygen atom to form the C-terminus of the beta chain, while the remainder of the serine residue undergoes an oxidative deamination to produce ammonia and the pyruvoyl prosthetic group on the alpha chain. During this reaction, the Ser that is part of the protease active site of the proenzyme becomes the pyruvoyl prosthetic group, which constitutes an essential element of the active site of the mature decarboxylase.

The protein localises to the cell membrane. The catalysed reaction is a 1,2-diacyl-sn-glycero-3-phospho-L-serine + H(+) = a 1,2-diacyl-sn-glycero-3-phosphoethanolamine + CO2. The protein operates within phospholipid metabolism; phosphatidylethanolamine biosynthesis; phosphatidylethanolamine from CDP-diacylglycerol: step 2/2. Catalyzes the formation of phosphatidylethanolamine (PtdEtn) from phosphatidylserine (PtdSer). The polypeptide is Phosphatidylserine decarboxylase proenzyme (Clostridium botulinum (strain Alaska E43 / Type E3)).